Here is a 93-residue protein sequence, read N- to C-terminus: Small ribosomal subunit protein bS18 (93 aa).

The protein belongs to the bacterial ribosomal protein bS18 family. As to quaternary structure, part of the 30S ribosomal subunit. Forms a tight heterodimer with protein bS6.

Its function is as follows. Binds as a heterodimer with protein bS6 to the central domain of the 16S rRNA, where it helps stabilize the platform of the 30S subunit. This chain is Small ribosomal subunit protein bS18, found in Acidovorax ebreus (strain TPSY) (Diaphorobacter sp. (strain TPSY)).